The chain runs to 547 residues: Probable bifunctional tRNA threonylcarbamoyladenosine biosynthesis protein (547 aa).

The kae1 stretch occupies residues 1-329 (MKKTFILGIE…FRTDDVKVTW (329 aa)). Fe cation-binding residues include histidine 113, histidine 117, and tyrosine 134. Residues 134–138 (YVSGA), aspartate 166, glycine 179, glutamate 183, and asparagine 262 each bind L-threonylcarbamoyladenylate. Aspartate 290 contacts Fe cation. The region spanning 340 to 547 (EISPETFFRM…EEIKKRARYA (208 aa)) is the Protein kinase domain. Residues 355 to 363 (LDNGAEAVV) and lysine 377 contribute to the ATP site. The active-site Proton acceptor; for kinase activity is the aspartate 464.

This sequence in the N-terminal section; belongs to the KAE1 / TsaD family. The protein in the C-terminal section; belongs to the protein kinase superfamily. Tyr protein kinase family. BUD32 subfamily. In terms of assembly, component of the KEOPS complex that consists of Kae1, Bud32, Cgi121 and Pcc1; the whole complex dimerizes. The cofactor is Fe(2+).

The protein resides in the cytoplasm. The enzyme catalyses L-seryl-[protein] + ATP = O-phospho-L-seryl-[protein] + ADP + H(+). The catalysed reaction is L-threonyl-[protein] + ATP = O-phospho-L-threonyl-[protein] + ADP + H(+). It carries out the reaction L-threonylcarbamoyladenylate + adenosine(37) in tRNA = N(6)-L-threonylcarbamoyladenosine(37) in tRNA + AMP + H(+). In terms of biological role, required for the formation of a threonylcarbamoyl group on adenosine at position 37 (t(6)A37) in tRNAs that read codons beginning with adenine. Is a component of the KEOPS complex that is probably involved in the transfer of the threonylcarbamoyl moiety of threonylcarbamoyl-AMP (TC-AMP) to the N6 group of A37. The Kae1 domain likely plays a direct catalytic role in this reaction. The Bud32 domain probably displays kinase activity that regulates Kae1 function. The polypeptide is Probable bifunctional tRNA threonylcarbamoyladenosine biosynthesis protein (Methanosarcina mazei (strain ATCC BAA-159 / DSM 3647 / Goe1 / Go1 / JCM 11833 / OCM 88) (Methanosarcina frisia)).